A 653-amino-acid chain; its full sequence is Exocyst complex component EXO70C1 (653 aa).

3 stretches are compositionally biased toward basic and acidic residues: residues 1-34 (MEKS…DELH), 159-177 (SREE…DGSN), and 438-451 (NKPE…QQQR). Disordered stretches follow at residues 1–50 (MEKS…HSLV), 159–190 (SREE…DSDR), and 432–456 (EANQ…DDEE).

The protein belongs to the EXO70 family. In terms of assembly, interacts with ROH1A. Binds directly to B1L. Phosphorylated. As to expression, expressed in anthers, pollen and root trichoblast cells.

The protein resides in the cytoplasm. In terms of biological role, required for global plant growth and for male transmission. Involved in the regulation of tip growth of pollen tube. The protein is Exocyst complex component EXO70C1 of Arabidopsis thaliana (Mouse-ear cress).